We begin with the raw amino-acid sequence, 353 residues long: UDP-N-acetylglucosamine--N-acetylmuramyl-(pentapeptide) pyrophosphoryl-undecaprenol N-acetylglucosamine transferase (353 aa).

UDP-N-acetyl-alpha-D-glucosamine contacts are provided by residues 10 to 12, Asn124, Ser183, and Gln283; that span reads TGG.

The protein belongs to the glycosyltransferase 28 family. MurG subfamily.

The protein localises to the cell inner membrane. It catalyses the reaction di-trans,octa-cis-undecaprenyl diphospho-N-acetyl-alpha-D-muramoyl-L-alanyl-D-glutamyl-meso-2,6-diaminopimeloyl-D-alanyl-D-alanine + UDP-N-acetyl-alpha-D-glucosamine = di-trans,octa-cis-undecaprenyl diphospho-[N-acetyl-alpha-D-glucosaminyl-(1-&gt;4)]-N-acetyl-alpha-D-muramoyl-L-alanyl-D-glutamyl-meso-2,6-diaminopimeloyl-D-alanyl-D-alanine + UDP + H(+). The protein operates within cell wall biogenesis; peptidoglycan biosynthesis. Functionally, cell wall formation. Catalyzes the transfer of a GlcNAc subunit on undecaprenyl-pyrophosphoryl-MurNAc-pentapeptide (lipid intermediate I) to form undecaprenyl-pyrophosphoryl-MurNAc-(pentapeptide)GlcNAc (lipid intermediate II). This Helicobacter pylori (strain G27) protein is UDP-N-acetylglucosamine--N-acetylmuramyl-(pentapeptide) pyrophosphoryl-undecaprenol N-acetylglucosamine transferase.